We begin with the raw amino-acid sequence, 193 residues long: NADH-quinone oxidoreductase subunit B (193 aa).

[4Fe-4S] cluster contacts are provided by Cys72, Cys73, Cys137, and Cys167.

Belongs to the complex I 20 kDa subunit family. In terms of assembly, NDH-1 is composed of 14 different subunits. Subunits NuoB, C, D, E, F, and G constitute the peripheral sector of the complex. It depends on [4Fe-4S] cluster as a cofactor.

It is found in the cell inner membrane. The catalysed reaction is a quinone + NADH + 5 H(+)(in) = a quinol + NAD(+) + 4 H(+)(out). In terms of biological role, NDH-1 shuttles electrons from NADH, via FMN and iron-sulfur (Fe-S) centers, to quinones in the respiratory chain. The immediate electron acceptor for the enzyme in this species is believed to be ubiquinone. Couples the redox reaction to proton translocation (for every two electrons transferred, four hydrogen ions are translocated across the cytoplasmic membrane), and thus conserves the redox energy in a proton gradient. This Bartonella henselae (strain ATCC 49882 / DSM 28221 / CCUG 30454 / Houston 1) (Rochalimaea henselae) protein is NADH-quinone oxidoreductase subunit B.